Here is a 341-residue protein sequence, read N- to C-terminus: L-threonine 3-dehydrogenase (341 aa).

Residue cysteine 38 coordinates Zn(2+). Catalysis depends on charge relay system residues threonine 40 and histidine 43. Histidine 63, glutamate 64, cysteine 93, cysteine 96, cysteine 99, and cysteine 107 together coordinate Zn(2+). Residues isoleucine 175, aspartate 195, arginine 200, 262 to 264, and 286 to 287 each bind NAD(+); these read LGI and IY.

The protein belongs to the zinc-containing alcohol dehydrogenase family. In terms of assembly, homotetramer. Zn(2+) serves as cofactor.

The protein resides in the cytoplasm. It catalyses the reaction L-threonine + NAD(+) = (2S)-2-amino-3-oxobutanoate + NADH + H(+). Its pathway is amino-acid degradation; L-threonine degradation via oxydo-reductase pathway; glycine from L-threonine: step 1/2. Functionally, catalyzes the NAD(+)-dependent oxidation of L-threonine to 2-amino-3-ketobutyrate. This chain is L-threonine 3-dehydrogenase, found in Yersinia enterocolitica serotype O:8 / biotype 1B (strain NCTC 13174 / 8081).